The primary structure comprises 169 residues: E1B protein, small T-antigen (169 aa).

It belongs to the adenoviridae E1B 19 kDa protein family.

This Canis lupus familiaris (Dog) protein is E1B protein, small T-antigen.